The sequence spans 191 residues: Elongation factor P-like protein (191 aa).

Belongs to the elongation factor P family.

In Photobacterium profundum (strain SS9), this protein is Elongation factor P-like protein.